The following is a 478-amino-acid chain: Calcium/calmodulin-dependent protein kinase type II subunit alpha (478 aa).

Tyr-13 bears the Phosphotyrosine mark. The Protein kinase domain occupies 13-271 (YQLFEELGKG…AAEALKHPWI (259 aa)). Residues 19–27 (LGKGAFSVV) and Lys-42 contribute to the ATP site. Asp-135 functions as the Proton acceptor in the catalytic mechanism. Position 257 is a phosphoserine (Ser-257). Residue Thr-286 is modified to Phosphothreonine; by autocatalysis. The calmodulin-binding stretch occupies residues 290–300 (LKKFNARRKLK). The tract at residues 310 to 320 (TRNFSGGKSGG) is interaction with BAALC. The disordered stretch occupies residues 314-341 (SGGKSGGNKKSDGVKESSESTNTTIEDE). A compositionally biased stretch (basic and acidic residues) spans 322–331 (KKSDGVKESS). A phosphoserine mark is found at Ser-330, Ser-331, and Ser-333. Residues Thr-336 and Thr-337 each carry the phosphothreonine modification. The residue at position 404 (Ser-404) is a Phosphoserine.

This sequence belongs to the protein kinase superfamily. CAMK Ser/Thr protein kinase family. CaMK subfamily. There are 4 genes encoding calcium/calmodulin-dependent protein kinase type II chains: CAMK2A, CAMK2B, CAMK2G and CAMK2D. The corresponding proteins assemble into homo- or heteromultimeric holoenzymes composed of 12 subunits with two hexameric rings stacked one on top of the other. Interacts with BAALC. Interacts with MPDZ. Interacts with SYN1. Interacts with CAMK2N2. Interacts with SYNGAP1. Interacts with SYNPO2. Interacts with SHANK3. Interacts with GRIN2B. Interacts with CACNB2. Interacts with LRRC7. Interacts with GRM5. Interacts with DAGLA (via C-terminal); this interaction is enhanced by autophosphorylation of CAMK2A at Thr-286. Interacts with CAMK2N1; this interaction requires CAMK2A activation by Ca(2+). Mg(2+) is required as a cofactor. In terms of processing, autophosphorylation of Thr-286 following activation by Ca(2+)/calmodulin. Phosphorylation of Thr-286 locks the kinase into an activated state. Palmitoylated. Probably palmitoylated by ZDHHC3 and ZDHHC7.

Its subcellular location is the synapse. It localises to the postsynaptic density. The protein resides in the cell projection. It is found in the dendritic spine. The protein localises to the dendrite. It catalyses the reaction L-seryl-[protein] + ATP = O-phospho-L-seryl-[protein] + ADP + H(+). The enzyme catalyses L-threonyl-[protein] + ATP = O-phospho-L-threonyl-[protein] + ADP + H(+). With respect to regulation, activated by Ca(2+)/calmodulin. Binding of calmodulin results in conformational change that relieves intrasteric autoinhibition and allows autophosphorylation of Thr-286 which turns the kinase in a constitutively active form and confers to the kinase a Ca(2+)-independent activity. In terms of biological role, calcium/calmodulin-dependent protein kinase that functions autonomously after Ca(2+)/calmodulin-binding and autophosphorylation, and is involved in various processes, such as synaptic plasticity, neurotransmitter release and long-term potentiation. Member of the NMDAR signaling complex in excitatory synapses, it regulates NMDAR-dependent potentiation of the AMPAR and therefore excitatory synaptic transmission. Regulates dendritic spine development. Also regulates the migration of developing neurons. Phosphorylates the transcription factor FOXO3 to activate its transcriptional activity. Phosphorylates the transcription factor ETS1 in response to calcium signaling, thereby decreasing ETS1 affinity for DNA. In response to interferon-gamma (IFN-gamma) stimulation, catalyzes phosphorylation of STAT1, stimulating the JAK-STAT signaling pathway. In response to interferon-beta (IFN-beta) stimulation, stimulates the JAK-STAT signaling pathway. Acts as a negative regulator of 2-arachidonoylglycerol (2-AG)-mediated synaptic signaling via modulation of DAGLA activity. The protein is Calcium/calmodulin-dependent protein kinase type II subunit alpha (CAMK2A) of Pongo abelii (Sumatran orangutan).